We begin with the raw amino-acid sequence, 159 residues long: Ribosomal RNA large subunit methyltransferase H (159 aa).

Residues L76 and G108 each coordinate S-adenosyl-L-methionine.

This sequence belongs to the RNA methyltransferase RlmH family. Homodimer.

The protein resides in the cytoplasm. The enzyme catalyses pseudouridine(1915) in 23S rRNA + S-adenosyl-L-methionine = N(3)-methylpseudouridine(1915) in 23S rRNA + S-adenosyl-L-homocysteine + H(+). Its function is as follows. Specifically methylates the pseudouridine at position 1915 (m3Psi1915) in 23S rRNA. In Levilactobacillus brevis (strain ATCC 367 / BCRC 12310 / CIP 105137 / JCM 1170 / LMG 11437 / NCIMB 947 / NCTC 947) (Lactobacillus brevis), this protein is Ribosomal RNA large subunit methyltransferase H.